A 211-amino-acid chain; its full sequence is Ribonuclease T (211 aa).

The Exonuclease domain occupies 24–198; it reads VVVDVETGGF…YDAEKTAHLF (175 aa). Mg(2+) is bound by residues Asp-27, Glu-29, His-185, and Asp-190. Catalysis depends on His-185, which acts as the Proton donor/acceptor.

Belongs to the RNase T family. As to quaternary structure, homodimer. Mg(2+) is required as a cofactor.

In terms of biological role, trims short 3' overhangs of a variety of RNA species, leaving a one or two nucleotide 3' overhang. Responsible for the end-turnover of tRNA: specifically removes the terminal AMP residue from uncharged tRNA (tRNA-C-C-A). Also appears to be involved in tRNA biosynthesis. The polypeptide is Ribonuclease T (Xylella fastidiosa (strain 9a5c)).